A 177-amino-acid chain; its full sequence is Large ribosomal subunit protein uL6 (177 aa).

The protein belongs to the universal ribosomal protein uL6 family. In terms of assembly, part of the 50S ribosomal subunit.

This protein binds to the 23S rRNA, and is important in its secondary structure. It is located near the subunit interface in the base of the L7/L12 stalk, and near the tRNA binding site of the peptidyltransferase center. This Mesorhizobium japonicum (strain LMG 29417 / CECT 9101 / MAFF 303099) (Mesorhizobium loti (strain MAFF 303099)) protein is Large ribosomal subunit protein uL6.